The chain runs to 353 residues: Glucose import ATP-binding protein GlcV (353 aa).

The ABC transporter domain occupies 4–241 (IIVKNVSKVF…PVSIQVASLI (238 aa)). Residues 40–46 (SGAGKTT), Gln89, and Glu166 each bind ATP.

It belongs to the ABC transporter superfamily. In terms of assembly, the complex is composed of two ATP-binding proteins (GlcV), two transmembrane proteins (GlcT and GlcU) and a solute-binding protein (GlcS). Forms transient head-to-tail homodimers in the presence of ATP-Mg(2+).

It is found in the cell membrane. It carries out the reaction D-glucose(out) + ATP + H2O = D-glucose(in) + ADP + phosphate + H(+). In terms of biological role, part of the ABC transporter complex GlcSTUV involved in glucose uptake. Responsible for energy coupling to the transport system. In vitro, as a free subunit, exhibits a constitutive ATPase activity. This Saccharolobus solfataricus (strain ATCC 35092 / DSM 1617 / JCM 11322 / P2) (Sulfolobus solfataricus) protein is Glucose import ATP-binding protein GlcV.